The primary structure comprises 224 residues: 7-cyano-7-deazaguanine synthase (224 aa).

10-20 (LSGGLDSATVV) provides a ligand contact to ATP. Zn(2+) is bound by residues Cys-189, Cys-199, Cys-202, and Cys-205.

This sequence belongs to the QueC family. Zn(2+) serves as cofactor.

It catalyses the reaction 7-carboxy-7-deazaguanine + NH4(+) + ATP = 7-cyano-7-deazaguanine + ADP + phosphate + H2O + H(+). The protein operates within purine metabolism; 7-cyano-7-deazaguanine biosynthesis. Catalyzes the ATP-dependent conversion of 7-carboxy-7-deazaguanine (CDG) to 7-cyano-7-deazaguanine (preQ(0)). The protein is 7-cyano-7-deazaguanine synthase of Pseudomonas putida (strain ATCC 700007 / DSM 6899 / JCM 31910 / BCRC 17059 / LMG 24140 / F1).